The sequence spans 425 residues: CDP-diacylglycerol--serine O-phosphatidyltransferase 1 (425 aa).

The segment covering 1–16 (MEPNGYRKERRKEQHL) has biased composition (basic and acidic residues). The disordered stretch occupies residues 1-23 (MEPNGYRKERRKEQHLGRMNGGG). 9 consecutive transmembrane segments (helical) span residues 42-62 (TISLLLIGACFLIWASGALDP), 79-99 (WAMIAVFLAYSLLQAPSTVLI), 105-125 (IWRLVHGMAVIYLVALTFLLF), 197-217 (PLLWVLSIGFELLEVTFRHML), 227-247 (SIVLDILICNWFGIWAGMYTV), 296-316 (FIQVLTLCIIFLTVELNTFFL), 321-341 (WIPPRNPVILYRLILWWLIAI), 361-381 (GAFCWLSLGICIVELLICIKF), and 390-410 (MPLWVVTLWGSVGLGLVAFLL).

The protein belongs to the CDP-alcohol phosphatidyltransferase class-I family. In terms of tissue distribution, expressed in trichomes, leaf veins and root vasculature.

The protein localises to the endoplasmic reticulum membrane. It localises to the nucleus envelope. It carries out the reaction a CDP-1,2-diacyl-sn-glycerol + L-serine = a 1,2-diacyl-sn-glycero-3-phospho-L-serine + CMP + H(+). The protein operates within phospholipid metabolism; phosphatidylethanolamine biosynthesis; phosphatidylethanolamine from CDP-diacylglycerol: step 1/2. Functionally, catalyzes a base-exchange reaction in which the polar head group of phosphatidylethanolamine (PE) or phosphatidylcholine (PC) is replaced by L-serine. Is essential for phosphatidylserine (PS) biosynthesis and PE seems to be the most plausible substrate. Plays an important role in microspore maturation. The protein is CDP-diacylglycerol--serine O-phosphatidyltransferase 1 (PSS1) of Arabidopsis thaliana (Mouse-ear cress).